A 637-amino-acid chain; its full sequence is Type II restriction enzyme and methyltransferase RM.BcgI (637 aa).

This sequence in the C-terminal section; belongs to the N(4)/N(6)-methyltransferase family. As to quaternary structure, heterotrimer of two A and one B subunit. Both subunits are necessary for DNA-binding, which is sequence non-specific. Mg(2+) is required as a cofactor.

It catalyses the reaction Endonucleolytic cleavage of DNA to give specific double-stranded fragments with terminal 5'-phosphates.. It carries out the reaction a 2'-deoxyadenosine in DNA + S-adenosyl-L-methionine = an N(6)-methyl-2'-deoxyadenosine in DNA + S-adenosyl-L-homocysteine + H(+). Its activity is regulated as follows. DNA restriction requires S-adenosyl-L-methionine and Mg(2+), and is inhibited by S-adenosyl-homocysteine. SAM may be a cofactor for DNA restriction. In terms of biological role, a B, G, H and S subtype restriction enzyme that recognizes the double-stranded sequence 5'-CGAN(6)TGC-3' and cleaves bilaterally and symmetrically 10 base pairs upstream and 12 base pairs downstream of the sequence to release a 34-base pair fragment. Methylation of the recognition sequence occurs on the adenine in either one or both strands; seems to methylate restricted DNA. This subunit has no methylation or DNA restriction activity on its own. The protein is Type II restriction enzyme and methyltransferase RM.BcgI of Heyndrickxia coagulans (Weizmannia coagulans).